The sequence spans 466 residues: Purple acid phosphatase 6 (466 aa).

A signal peptide spans 1–20 (MKNLVIFAFLFLSITTVING). N-linked (GlcNAc...) asparagine glycosylation occurs at Asn88. Residue Asp164 coordinates Fe cation. Asn172 carries an N-linked (GlcNAc...) asparagine glycan. Fe cation-binding residues include Asp192 and Tyr195. Asp192 lines the Zn(2+) pocket. Asn229 and His314 together coordinate Zn(2+). Residue Asn229 coordinates substrate. Residue His324 is the Proton donor of the active site. Residue His351 participates in Zn(2+) binding. Position 351–353 (351–353 (HVH)) interacts with substrate. His353 contributes to the Fe cation binding site. Asn367 and Asn424 each carry an N-linked (GlcNAc...) asparagine glycan.

Belongs to the metallophosphoesterase superfamily. Purple acid phosphatase family. In terms of assembly, homodimer. It depends on Fe cation as a cofactor. The cofactor is Zn(2+). In terms of tissue distribution, specifically expressed in flowers.

Its subcellular location is the secreted. It carries out the reaction a phosphate monoester + H2O = an alcohol + phosphate. The sequence is that of Purple acid phosphatase 6 (PAP6) from Arabidopsis thaliana (Mouse-ear cress).